The chain runs to 326 residues: MLTLARQQQRQNIRWLLCLSVLMLLALLLSLCAGEQWISPGDWFTPRGELFVWQIRLPRTLAVLLVGAALAISGAVMQALFENPLAEPGLLGVSNGAGVGLIAAVLLGQGQLPNWALGLCAIAGALIITLILLRFARRHLSTSRLLLAGVALGIICSALMTWAIYFSTSVDLRQLMYWMMGGFGGVDWRQSWLMLALIPVLLWICCQSRPMNMLALGEISARQLGLPLWFWRNVLVAATGWMVGVSVALAGAIGFIGLVIPHILRLCGLTDHRVLLPGCALAGASAVLLADIVARLALAAAELPIGVVTATLGAPVFIWLLLKAGR.

The next 9 helical transmembrane spans lie at 15–35 (WLLC…CAGE), 61–81 (LAVL…QALF), 88–108 (PGLL…VLLG), 112–132 (LPNW…TLIL), 146–166 (LLAG…AIYF), 184–204 (GGVD…LLWI), 240–260 (GWMV…GLVI), 274–294 (VLLP…DIVA), and 302–322 (ELPI…WLLL).

The protein belongs to the binding-protein-dependent transport system permease family. FecCD subfamily. As to quaternary structure, the complex is composed of two ATP-binding proteins (BtuD), two transmembrane proteins (BtuC) and a solute-binding protein (BtuF).

It localises to the cell inner membrane. Part of the ABC transporter complex BtuCDF involved in vitamin B12 import. Involved in the translocation of the substrate across the membrane. This Shigella sonnei (strain Ss046) protein is Vitamin B12 import system permease protein BtuC.